Consider the following 386-residue polypeptide: L-lactate oxidase (386 aa).

Positions 16–382 (AQAPFPICFA…RTITLVKNDG (367 aa)) constitute an FMN hydroxy acid dehydrogenase domain. Tyr42 contributes to the pyruvate binding site. Residues 95 to 97 (PVG), Ser124, and Gln146 each bind FMN. Residue Tyr148 coordinates pyruvate. Thr174 lines the FMN pocket. Arg183 lines the pyruvate pocket. The FMN site is built by Lys253 and Ser275. Pyruvate is bound by residues His277 and Arg280. His277 (proton acceptor) is an active-site residue. FMN contacts are provided by residues 308-312 (DSGVY) and Arg332.

Belongs to the FMN-dependent alpha-hydroxy acid dehydrogenase family. In terms of assembly, homotetramer. FMN is required as a cofactor.

The enzyme catalyses a (2S)-2-hydroxycarboxylate + O2 = a 2-oxocarboxylate + H2O2. The catalysed reaction is (S)-lactate + O2 = pyruvate + H2O2. It carries out the reaction 2-hydroxyoctanoate + O2 = 2-oxooctanoate + H2O2. It catalyses the reaction mandelate + O2 = phenylglyoxylate + H2O2. The enzyme catalyses 2-hydroxyoctadecanoate + O2 = 2-oxooctadecanoate + H2O2. The catalysed reaction is (S)-2-hydroxyglutarate + O2 = H2O2 + 2-oxoglutarate. Oxidase that catalyzes the oxidation of a broad range of 2-hydroxyacids in vitro, such as (S)-lactate, 2-hydroxyoctanoate, mandelate, 2-hydroxyoctadecanoate and (S)-2-hydroxyglutarate, to the corresponding 2-oxoacids, with a reduction of O2 to H2O2. May be involved in the utilization of L-lactate as an energy source for growth. The chain is L-lactate oxidase from Lysinibacillus sphaericus (strain C3-41).